We begin with the raw amino-acid sequence, 252 residues long: Small ribosomal subunit protein uS2 (252 aa).

It belongs to the universal ribosomal protein uS2 family.

The chain is Small ribosomal subunit protein uS2 from Chlorobium phaeobacteroides (strain DSM 266 / SMG 266 / 2430).